Consider the following 166-residue polypeptide: Probable RNA-binding protein EIF1AD (166 aa).

The region spanning 5–89 is the S1-like domain; the sequence is TKRKHVVKEV…VKAEISFVLC (85 aa). The Nuclear localization signal motif lies at 6–12; that stretch reads KRKHVVK. Thr33 is modified (phosphothreonine). The short motif at 56–65 is the Nuclear localization signal element; the sequence is KYRKNIWIKR. The segment at 99-166 is disordered; the sequence is DGHWPEAFSQ…EEESEEEEAA (68 aa). The span at 110–119 shows a compositional bias: basic and acidic residues; it reads TEKDNNDRNR. Phosphoserine occurs at positions 132, 136, 137, 138, 156, and 160. Acidic residues predominate over residues 156–166; sequence SEEESEEEEAA.

The protein belongs to the EIF1AD family. Interacts with GAPDH and STAT1.

Its subcellular location is the nucleus. Its function is as follows. Plays a role into cellular response to oxidative stress. Decreases cell proliferation. The chain is Probable RNA-binding protein EIF1AD (EIF1AD) from Bos taurus (Bovine).